We begin with the raw amino-acid sequence, 380 residues long: MNTQLPPKQRIVVGLSGGVDSAVSAWLLKQQGHEVVAIFMKNWEDDDDSEFCSSRQDFLDAASVADVLGIEIEHVNFAAEYKDRVFAEFLREYSAGRTPNPDVLCNAEIKFKAFLDHAMRLGADRIATGHYARVRHNPATGLHELLKGLDPLKDQSYFLHRLNQAQLASTLFPVGELPKTEVRRIALEIGLPNAKKKDSTGICFIGERPFREFLNRYLSHEPGPIKDDRGRRIGEHVGLSFYTLGQRKGIGIGGLKEKGAPRGGGEHEPWFVARKDLASNTLYAVQGHDHPWLQSQRLSADDASWIGTVPQPGQGGLAAKTRYRQADSACAVDALDAAARTLSMSFPAPQWAVTPGQSVVLYEGEVCLGGAVIAAADQRA.

ATP contacts are provided by residues 14–21 and Met40; that span reads GLSGGVDS. The interaction with target base in tRNA stretch occupies residues 100–102; that stretch reads NPD. Catalysis depends on Cys105, which acts as the Nucleophile. Cys105 and Cys203 form a disulfide bridge. Gly129 serves as a coordination point for ATP. The interval 153–155 is interaction with tRNA; it reads KDQ. The Cysteine persulfide intermediate role is filled by Cys203. The interaction with tRNA stretch occupies residues 322-323; sequence RY.

It belongs to the MnmA/TRMU family.

Its subcellular location is the cytoplasm. The catalysed reaction is S-sulfanyl-L-cysteinyl-[protein] + uridine(34) in tRNA + AH2 + ATP = 2-thiouridine(34) in tRNA + L-cysteinyl-[protein] + A + AMP + diphosphate + H(+). Catalyzes the 2-thiolation of uridine at the wobble position (U34) of tRNA, leading to the formation of s(2)U34. This Leptothrix cholodnii (strain ATCC 51168 / LMG 8142 / SP-6) (Leptothrix discophora (strain SP-6)) protein is tRNA-specific 2-thiouridylase MnmA.